The primary structure comprises 146 residues: NADH-quinone oxidoreductase subunit A (146 aa).

3 helical membrane-spanning segments follow: residues 8 to 28 (FGSVFVFLLLGVIFVVGGYLT), 63 to 83 (FYVVALIFIIFDVEVVFLYPW), and 93 to 113 (FALIEVLVFAGILILGLAYAW).

The protein belongs to the complex I subunit 3 family. NDH-1 is composed of 14 different subunits. Subunits NuoA, H, J, K, L, M, N constitute the membrane sector of the complex.

It localises to the cell inner membrane. It carries out the reaction a quinone + NADH + 5 H(+)(in) = a quinol + NAD(+) + 4 H(+)(out). Functionally, NDH-1 shuttles electrons from NADH, via FMN and iron-sulfur (Fe-S) centers, to quinones in the respiratory chain. The immediate electron acceptor for the enzyme in this species is believed to be a menaquinone. Couples the redox reaction to proton translocation (for every two electrons transferred, four hydrogen ions are translocated across the cytoplasmic membrane), and thus conserves the redox energy in a proton gradient. This chain is NADH-quinone oxidoreductase subunit A, found in Chlorobium chlorochromatii (strain CaD3).